We begin with the raw amino-acid sequence, 93 residues long: Co-chaperonin GroES (93 aa).

Belongs to the GroES chaperonin family. Heptamer of 7 subunits arranged in a ring. Interacts with the chaperonin GroEL.

The protein resides in the cytoplasm. Its function is as follows. Together with the chaperonin GroEL, plays an essential role in assisting protein folding. The GroEL-GroES system forms a nano-cage that allows encapsulation of the non-native substrate proteins and provides a physical environment optimized to promote and accelerate protein folding. GroES binds to the apical surface of the GroEL ring, thereby capping the opening of the GroEL channel. The polypeptide is Co-chaperonin GroES (Streptococcus gordonii).